Consider the following 354-residue polypeptide: Membrane progestin receptor beta (354 aa).

The Cytoplasmic segment spans residues Met-1–Glu-75. A helical transmembrane segment spans residues Val-76–Phe-96. Topologically, residues Val-97–Pro-111 are extracellular. A helical transmembrane segment spans residues Leu-112–Leu-132. Topologically, residues Gln-133–Arg-174 are cytoplasmic. The helical transmembrane segment at Phe-175–Cys-195 threads the bilayer. The Extracellular segment spans residues Tyr-196–Gln-213. The helical transmembrane segment at Val-214–Leu-234 threads the bilayer. The Cytoplasmic portion of the chain corresponds to Cys-235 to Gln-243. Residues Ala-244–Cys-264 traverse the membrane as a helical segment. Over Pro-265 to Gln-283 the chain is Extracellular. The chain crosses the membrane as a helical span at residues Ile-284–Tyr-304. The Cytoplasmic segment spans residues Lys-305–Ser-319. The helical transmembrane segment at Ile-320–Leu-340 threads the bilayer. Residues Leu-341–Ser-354 are Extracellular-facing.

Belongs to the ADIPOR family.

The protein resides in the cell membrane. In terms of biological role, steroid membrane receptor. Binds progesterone. May be involved in oocyte maturation. This Sus scrofa (Pig) protein is Membrane progestin receptor beta (PAQR8).